A 185-amino-acid polypeptide reads, in one-letter code: Elongation factor P (185 aa).

It belongs to the elongation factor P family.

It localises to the cytoplasm. Its pathway is protein biosynthesis; polypeptide chain elongation. In terms of biological role, involved in peptide bond synthesis. Stimulates efficient translation and peptide-bond synthesis on native or reconstituted 70S ribosomes in vitro. Probably functions indirectly by altering the affinity of the ribosome for aminoacyl-tRNA, thus increasing their reactivity as acceptors for peptidyl transferase. This Synechococcus elongatus (strain ATCC 33912 / PCC 7942 / FACHB-805) (Anacystis nidulans R2) protein is Elongation factor P (efp).